The following is a 448-amino-acid chain: Neurexin-1b-beta (448 aa).

A signal peptide spans M1–S38. Residues G39–T375 lie on the Extracellular side of the membrane. A Laminin G-like domain is found at S71 to V269. The helical transmembrane segment at G376–M396 threads the bilayer. At Y397 to V448 the chain is on the cytoplasmic side. A compositionally biased stretch (basic and acidic residues) spans E426–S436. A disordered region spans residues E426 to V448.

Belongs to the neurexin family.

The protein localises to the membrane. Functionally, neuronal cell surface protein that may be involved in cell recognition and cell adhesion. May play a role in formation or maintenance of synaptic junctions. In Danio rerio (Zebrafish), this protein is Neurexin-1b-beta (nrxn1b).